The primary structure comprises 327 residues: tRNA-dihydrouridine(20/20a) synthase (327 aa).

FMN-binding positions include 17–19 (PML) and Gln-69. Cys-99 acts as the Proton donor in catalysis. Residues Lys-138, His-170, 210 to 212 (NGG), and 232 to 233 (GR) each bind FMN.

Belongs to the Dus family. DusA subfamily. FMN serves as cofactor.

The enzyme catalyses 5,6-dihydrouridine(20) in tRNA + NADP(+) = uridine(20) in tRNA + NADPH + H(+). The catalysed reaction is 5,6-dihydrouridine(20) in tRNA + NAD(+) = uridine(20) in tRNA + NADH + H(+). It catalyses the reaction 5,6-dihydrouridine(20a) in tRNA + NADP(+) = uridine(20a) in tRNA + NADPH + H(+). It carries out the reaction 5,6-dihydrouridine(20a) in tRNA + NAD(+) = uridine(20a) in tRNA + NADH + H(+). Functionally, catalyzes the synthesis of 5,6-dihydrouridine (D), a modified base found in the D-loop of most tRNAs, via the reduction of the C5-C6 double bond in target uridines. Specifically modifies U20 and U20a in tRNAs. This chain is tRNA-dihydrouridine(20/20a) synthase, found in Pasteurella multocida (strain Pm70).